The chain runs to 571 residues: Proline--tRNA ligase (571 aa).

It belongs to the class-II aminoacyl-tRNA synthetase family. ProS type 1 subfamily. In terms of assembly, homodimer.

It localises to the cytoplasm. The enzyme catalyses tRNA(Pro) + L-proline + ATP = L-prolyl-tRNA(Pro) + AMP + diphosphate. In terms of biological role, catalyzes the attachment of proline to tRNA(Pro) in a two-step reaction: proline is first activated by ATP to form Pro-AMP and then transferred to the acceptor end of tRNA(Pro). As ProRS can inadvertently accommodate and process non-cognate amino acids such as alanine and cysteine, to avoid such errors it has two additional distinct editing activities against alanine. One activity is designated as 'pretransfer' editing and involves the tRNA(Pro)-independent hydrolysis of activated Ala-AMP. The other activity is designated 'posttransfer' editing and involves deacylation of mischarged Ala-tRNA(Pro). The misacylated Cys-tRNA(Pro) is not edited by ProRS. In Acinetobacter baumannii (strain ATCC 17978 / DSM 105126 / CIP 53.77 / LMG 1025 / NCDC KC755 / 5377), this protein is Proline--tRNA ligase.